Reading from the N-terminus, the 166-residue chain is NADH-quinone oxidoreductase subunit I (166 aa).

2 consecutive 4Fe-4S ferredoxin-type domains span residues 57–87 (LRRYPNGEERCIACKLCEAVCPALAITIESE) and 97–126 (TRYDIDMFKCINCGLCEESCPVDSIVVTPI). Cys-67, Cys-70, Cys-73, Cys-77, Cys-106, Cys-109, Cys-112, and Cys-116 together coordinate [4Fe-4S] cluster.

Belongs to the complex I 23 kDa subunit family. In terms of assembly, NDH-1 is composed of 14 different subunits. Subunits NuoA, H, J, K, L, M, N constitute the membrane sector of the complex. [4Fe-4S] cluster is required as a cofactor.

The protein resides in the cell inner membrane. It carries out the reaction a quinone + NADH + 5 H(+)(in) = a quinol + NAD(+) + 4 H(+)(out). In terms of biological role, NDH-1 shuttles electrons from NADH, via FMN and iron-sulfur (Fe-S) centers, to quinones in the respiratory chain. The immediate electron acceptor for the enzyme in this species is believed to be ubiquinone. Couples the redox reaction to proton translocation (for every two electrons transferred, four hydrogen ions are translocated across the cytoplasmic membrane), and thus conserves the redox energy in a proton gradient. The protein is NADH-quinone oxidoreductase subunit I of Legionella pneumophila (strain Paris).